We begin with the raw amino-acid sequence, 391 residues long: Inner membrane protein YdcO (391 aa).

The Cytoplasmic portion of the chain corresponds to 1-9; sequence MRLFSIPPP. A helical transmembrane segment spans residues 10–30; it reads TLLAGFLAVLIGYASSAAIIW. Residues 31–42 are Periplasmic-facing; that stretch reads QAAIVAGATTAQ. The helical transmembrane segment at 43 to 63 threads the bilayer; that stretch reads ISGWMTALGLAMGVSTLTLTL. At 64-93 the chain is on the cytoplasmic side; sequence WYRVPVLTAWSTPGAALLVTGLQGLTLNEA. The chain crosses the membrane as a helical span at residues 94–114; it reads IGVFIVTNALIVLCGITGLFA. Residues 115–123 lie on the Periplasmic side of the membrane; sequence RLMRIIPHS. Residues 124 to 144 traverse the membrane as a helical segment; the sequence is LAAAMLAGILLRFGLQAFASL. Residues 145-167 lie on the Cytoplasmic side of the membrane; the sequence is DGQFTLCGSMLLVWLATKAVAPR. The helical transmembrane segment at 168–188 threads the bilayer; the sequence is YAVIAAMIIGIVIVIAQGDVV. Over 189–200 the chain is Periplasmic; it reads TTDVVFKPVLPT. A helical transmembrane segment spans residues 201 to 221; that stretch reads YITPDFSFAHSLSVALPLFLV. Residues 222–246 lie on the Cytoplasmic side of the membrane; it reads TMASQNAPGIAAMKAAGYSAPVSPL. A helical transmembrane segment spans residues 247–267; that stretch reads IVFTGLLALVFSPFGVYSVGI. Residues 268–287 lie on the Periplasmic side of the membrane; that stretch reads AAITAAICQSPEAHPDKDQR. The chain crosses the membrane as a helical span at residues 288-308; sequence WLAAAVAGIFYLLAGLFGSAI. Residues 309 to 311 lie on the Cytoplasmic side of the membrane; it reads TGM. A helical membrane pass occupies residues 312-332; the sequence is MAALPVSWIQMLAGLALLSTI. Residues 333–361 are Periplasmic-facing; the sequence is GGSLYQALHNERERDAAVVAFLVTASGLT. Residues 362 to 382 traverse the membrane as a helical segment; that stretch reads LVGIGSAFWGLIAGGVCYVVL. Topologically, residues 383 to 391 are cytoplasmic; the sequence is NLIADRNRY.

The protein resides in the cell inner membrane. The protein is Inner membrane protein YdcO (ydcO) of Escherichia coli (strain K12).